Here is a 182-residue protein sequence, read N- to C-terminus: UPF0397 protein SPT_0523 (182 aa).

Transmembrane regions (helical) follow at residues 10-30, 46-66, 73-93, 109-129, and 148-168; these read VVAV…NIPT, LLSI…GHAI, YGLW…VGLF, ILIF…VLAP, and IVAG…LLLA.

The protein belongs to the UPF0397 family.

It is found in the cell membrane. This is UPF0397 protein SPT_0523 from Streptococcus pneumoniae (strain Taiwan19F-14).